A 285-amino-acid chain; its full sequence is Protein phosphatase 1 regulatory subunit 3C (285 aa).

The short motif at lysine 72–phenylalanine 75 is the PP1-binding motif element. Residues arginine 133–valine 241 form the CBM21 domain.

Interacts with PPP1CC catalytic subunit of PP1 and associates with glycogen. Forms complexes with glycogen phosphorylase, glycogen synthase and phosphorylase kinase which is necessary for its regulation of PP1 activity. As to expression, ubiquitously expressed in the examined tissues including brain, muscle, liver and spleen under normoxic condition. Its expression is higher in insulin sensitive tissues (liver and muscle) than in the brain and spleen. Significantly increased expression in the liver and muscle under short-term (1-12 hours) hypoxia exposure. Significantly increased expression after long-term (natural) hypoxia exposure in liver and spleen. No significant differences in expression in brain for any time periods.

Its function is as follows. Acts as a glycogen-targeting subunit for PP1 and regulates its activity. Activates glycogen synthase, reduces glycogen phosphorylase activity and limits glycogen breakdown. In Clarias batrachus (Walking catfish), this protein is Protein phosphatase 1 regulatory subunit 3C.